Consider the following 506-residue polypeptide: (+)-piperitol/(+)-sesamin synthase CYP81Q2 (506 aa).

Residues A3–L23 traverse the membrane as a helical segment. Position 439 (C439) interacts with heme.

The protein belongs to the cytochrome P450 family. The cofactor is heme. In terms of tissue distribution, expressed in seeds.

The protein localises to the membrane. The enzyme catalyses (+)-piperitol + reduced [NADPH--hemoprotein reductase] + O2 = (+)-sesamin + oxidized [NADPH--hemoprotein reductase] + 2 H2O + H(+). The catalysed reaction is (+)-pinoresinol + reduced [NADPH--hemoprotein reductase] + O2 = (+)-piperitol + oxidized [NADPH--hemoprotein reductase] + 2 H2O + H(+). In terms of biological role, involved in the biosynthesis of (+)-sesamin, a furofuran class lignan. Functions in a dual catalytic mode. Catalyzes the synthesis of (+)-sesamin from (+)- pinoresinol by formation of two successive methylenedioxy bridges on (+)-pinoresinol and (+)-piperitol, respectively. This Sesamum radiatum (Black benniseed) protein is (+)-piperitol/(+)-sesamin synthase CYP81Q2.